We begin with the raw amino-acid sequence, 146 residues long: Metallothiol transferase FosB (146 aa).

A VOC domain is found at 4–120; the sequence is GINHMTFSVS…DGHLLEVHTG (117 aa). Histidine 7, histidine 66, and glutamate 116 together coordinate Mg(2+). The active-site Proton donor/acceptor is the glutamate 116.

This sequence belongs to the fosfomycin resistance protein family. FosB subfamily. As to quaternary structure, homodimer. Mg(2+) is required as a cofactor.

It is found in the cytoplasm. Its function is as follows. Metallothiol transferase which confers resistance to fosfomycin by catalyzing the addition of a thiol cofactor to fosfomycin. L-cysteine is probably the physiological thiol donor. The polypeptide is Metallothiol transferase FosB (Shouchella clausii (strain KSM-K16) (Alkalihalobacillus clausii)).